Here is a 709-residue protein sequence, read N- to C-terminus: Molybdenum cofactor sulfurase (709 aa).

K208 carries the N6-(pyridoxal phosphate)lysine modification. Residue C367 is part of the active site. Residues 563–707 (DNALDRQNCR…LESGMSVNFS (145 aa)) form the MOSC domain.

This sequence belongs to the class-V pyridoxal-phosphate-dependent aminotransferase family. MOCOS subfamily. Pyridoxal 5'-phosphate is required as a cofactor.

The enzyme catalyses Mo-molybdopterin + L-cysteine + AH2 = thio-Mo-molybdopterin + L-alanine + A + H2O. The protein operates within cofactor biosynthesis; molybdopterin biosynthesis. Sulfurates the molybdenum cofactor. Sulfation of molybdenum is essential for xanthine dehydrogenase (XDH) and aldehyde oxidase (ADO) enzymes in which molybdenum cofactor is liganded by 1 oxygen and 1 sulfur atom in active form. The protein is Molybdenum cofactor sulfurase of Caenorhabditis elegans.